A 247-amino-acid polypeptide reads, in one-letter code: Synaptogyrin homolog 1 (247 aa).

Residues 21-175 (FFKKPTVLFR…AAFFAWRRYE (155 aa)) enclose the MARVEL domain. Helical transmembrane passes span 25–45 (PTVL…YSVS), 69–89 (CSFA…LIVL), 105–125 (AVLA…IGFF), and 151–171 (FGIL…FFAW). Residues 206-247 (DSTGIGHVGAPPPQSSYQSGAAPQTMQQPPSNPYTQSEGYGY) form a disordered region. Positions 220–247 (SSYQSGAAPQTMQQPPSNPYTQSEGYGY) are enriched in polar residues.

It belongs to the synaptogyrin family. Expressed in a wide variety of neurons and is expressed weakly in the non-neuronal distal tip cells. A punctate pattern was observed in the ventral and dorsal nerve cords and the nerve ring. Weak expression is seen in neuronal cell bodies and commissures.

Its subcellular location is the membrane. This chain is Synaptogyrin homolog 1 (sng-1), found in Caenorhabditis elegans.